Reading from the N-terminus, the 490-residue chain is Dual specificity protein kinase CLK3 (490 aa).

The interval Met1–Asp138 is disordered. A Phosphotyrosine modification is found at Tyr7. 6 positions are modified to phosphoserine: Ser9, Ser49, Ser51, Ser67, Ser76, and Ser78. Composition is skewed to basic and acidic residues over residues Tyr26–Pro56 and Glu63–Ser76. Residues Arg88–Arg116 show a composition bias toward basic residues. Positions Ser117–Lys130 are enriched in low complexity. Ser135 bears the Phosphoserine mark. Residues Tyr156 to Phe472 form the Protein kinase domain. ATP is bound by residues Leu162–Val170 and Lys186. The Proton acceptor role is filled by Asp283.

It belongs to the protein kinase superfamily. CMGC Ser/Thr protein kinase family. Lammer subfamily. Autophosphorylates on all three types of residues.

Its subcellular location is the nucleus. It is found in the cytoplasm. It localises to the cytoplasmic vesicle. The protein localises to the secretory vesicle. The protein resides in the acrosome. It catalyses the reaction L-seryl-[protein] + ATP = O-phospho-L-seryl-[protein] + ADP + H(+). It carries out the reaction L-threonyl-[protein] + ATP = O-phospho-L-threonyl-[protein] + ADP + H(+). The enzyme catalyses L-tyrosyl-[protein] + ATP = O-phospho-L-tyrosyl-[protein] + ADP + H(+). With respect to regulation, leucettine L41 inhibits its kinase activity and affects the regulation of alternative splicing mediated by phosphorylation of SR proteins. Functionally, dual specificity kinase acting on both serine/threonine and tyrosine-containing substrates. Phosphorylates serine- and arginine-rich (SR) proteins of the spliceosomal complex. May be a constituent of a network of regulatory mechanisms that enable SR proteins to control RNA splicing and can cause redistribution of SR proteins from speckles to a diffuse nucleoplasmic distribution. Phosphorylates SRSF1 and SRSF3. Regulates the alternative splicing of tissue factor (F3) pre-mRNA in endothelial cells. The polypeptide is Dual specificity protein kinase CLK3 (Clk3) (Rattus norvegicus (Rat)).